The primary structure comprises 496 residues: Aspartyl/glutamyl-tRNA(Asn/Gln) amidotransferase subunit B (496 aa).

This sequence belongs to the GatB/GatE family. GatB subfamily. As to quaternary structure, heterotrimer of A, B and C subunits.

It carries out the reaction L-glutamyl-tRNA(Gln) + L-glutamine + ATP + H2O = L-glutaminyl-tRNA(Gln) + L-glutamate + ADP + phosphate + H(+). The catalysed reaction is L-aspartyl-tRNA(Asn) + L-glutamine + ATP + H2O = L-asparaginyl-tRNA(Asn) + L-glutamate + ADP + phosphate + 2 H(+). Functionally, allows the formation of correctly charged Asn-tRNA(Asn) or Gln-tRNA(Gln) through the transamidation of misacylated Asp-tRNA(Asn) or Glu-tRNA(Gln) in organisms which lack either or both of asparaginyl-tRNA or glutaminyl-tRNA synthetases. The reaction takes place in the presence of glutamine and ATP through an activated phospho-Asp-tRNA(Asn) or phospho-Glu-tRNA(Gln). The chain is Aspartyl/glutamyl-tRNA(Asn/Gln) amidotransferase subunit B from Xanthobacter autotrophicus (strain ATCC BAA-1158 / Py2).